The chain runs to 267 residues: Mlc titration factor A (267 aa).

Zn(2+) is bound by residues histidine 111, histidine 148, histidine 152, and glutamate 211.

Belongs to the MtfA family. As to quaternary structure, interacts with Mlc. Zn(2+) is required as a cofactor.

Its subcellular location is the cytoplasm. Its function is as follows. Involved in the modulation of the activity of the glucose-phosphotransferase system (glucose-PTS). Interacts with the transcriptional repressor Mlc, preventing its interaction with DNA and leading to the modulation of expression of genes regulated by Mlc, including ptsG, which encodes the PTS system glucose-specific EIICB component. Functionally, shows zinc-dependent metallopeptidase activity. The chain is Mlc titration factor A from Yersinia enterocolitica serotype O:8 / biotype 1B (strain NCTC 13174 / 8081).